Reading from the N-terminus, the 194-residue chain is Nucleoside triphosphate pyrophosphatase (194 aa).

Asp68 serves as the catalytic Proton acceptor.

It belongs to the Maf family. Requires a divalent metal cation as cofactor.

Its subcellular location is the cytoplasm. The enzyme catalyses a ribonucleoside 5'-triphosphate + H2O = a ribonucleoside 5'-phosphate + diphosphate + H(+). It catalyses the reaction a 2'-deoxyribonucleoside 5'-triphosphate + H2O = a 2'-deoxyribonucleoside 5'-phosphate + diphosphate + H(+). In terms of biological role, nucleoside triphosphate pyrophosphatase. May have a dual role in cell division arrest and in preventing the incorporation of modified nucleotides into cellular nucleic acids. The chain is Nucleoside triphosphate pyrophosphatase from Corynebacterium jeikeium (strain K411).